We begin with the raw amino-acid sequence, 357 residues long: Ion-translocating oxidoreductase complex subunit D (357 aa).

A run of 3 helical transmembrane segments spans residues 35–55 (VWLYGWPALNLLLITLVTVLV), 88–108 (LPPWAPWWIGVIGGLLAVVLG), and 119–139 (LFNPAMVARVALLIAFPVEMT). An FMN phosphoryl threonine modification is found at threonine 176. A run of 5 helical transmembrane segments spans residues 209-229 (APGSLAEGSALLLALGGVYLI), 233-253 (VIAWEIPAVMLATLAVLATVF), 261-281 (YADAGVHILAGSTLLAAFFIA), 295-315 (AVFAAGCAVIVWVVRTYGGYP), and 316-336 (EATAFAVLLMNAFTPLIDHWI).

The protein belongs to the NqrB/RnfD family. In terms of assembly, the complex is composed of six subunits: RnfA, RnfB, RnfC, RnfD, RnfE and RnfG. Requires FMN as cofactor.

Its subcellular location is the cell inner membrane. Functionally, part of a membrane-bound complex that couples electron transfer with translocation of ions across the membrane. This is Ion-translocating oxidoreductase complex subunit D from Halorhodospira halophila (strain DSM 244 / SL1) (Ectothiorhodospira halophila (strain DSM 244 / SL1)).